Reading from the N-terminus, the 256-residue chain is Thiazole synthase (256 aa).

The active-site Schiff-base intermediate with DXP is K95. Residues G156, 182–183 (AG), and 204–205 (NT) contribute to the 1-deoxy-D-xylulose 5-phosphate site.

It belongs to the ThiG family. Homotetramer. Forms heterodimers with either ThiH or ThiS.

The protein localises to the cytoplasm. The catalysed reaction is [ThiS sulfur-carrier protein]-C-terminal-Gly-aminoethanethioate + 2-iminoacetate + 1-deoxy-D-xylulose 5-phosphate = [ThiS sulfur-carrier protein]-C-terminal Gly-Gly + 2-[(2R,5Z)-2-carboxy-4-methylthiazol-5(2H)-ylidene]ethyl phosphate + 2 H2O + H(+). Its pathway is cofactor biosynthesis; thiamine diphosphate biosynthesis. Functionally, catalyzes the rearrangement of 1-deoxy-D-xylulose 5-phosphate (DXP) to produce the thiazole phosphate moiety of thiamine. Sulfur is provided by the thiocarboxylate moiety of the carrier protein ThiS. In vitro, sulfur can be provided by H(2)S. The sequence is that of Thiazole synthase from Salmonella choleraesuis (strain SC-B67).